The chain runs to 884 residues: Probable LRR receptor-like serine/threonine-protein kinase PAM74 (884 aa).

The first 23 residues, Met-1–Ala-23, serve as a signal peptide directing secretion. At Gln-24–Pro-510 the chain is on the extracellular side. N-linked (GlcNAc...) asparagine glycans are attached at residues Asn-143, Asn-182, Asn-200, Asn-256, Asn-289, Asn-400, Asn-403, Asn-417, Asn-433, Asn-444, Asn-465, and Asn-470. 3 LRR repeats span residues Arg-412–Asn-433, His-436–Gln-457, and Ser-460–Arg-480. The helical transmembrane segment at Val-511 to Phe-531 threads the bilayer. Residues Val-532–Arg-884 are Cytoplasmic-facing. At Thr-570 the chain carries Phosphothreonine. Positions Asn-579 to Leu-852 constitute a Protein kinase domain. ATP-binding positions include Val-585–Val-593 and Lys-607. Tyr-652 carries the phosphotyrosine modification. Residue Asp-704 is the Proton acceptor of the active site. Ser-738 carries the phosphoserine modification. Thr-739 and Thr-744 each carry phosphothreonine. Phosphotyrosine is present on Tyr-752.

It belongs to the protein kinase superfamily. Ser/Thr protein kinase family. As to quaternary structure, binds to the ammonium transporter AMT1-1.

Its subcellular location is the membrane. The catalysed reaction is L-seryl-[protein] + ATP = O-phospho-L-seryl-[protein] + ADP + H(+). It catalyses the reaction L-threonyl-[protein] + ATP = O-phospho-L-threonyl-[protein] + ADP + H(+). Its function is as follows. Required for accurate photosynthesis. The sequence is that of Probable LRR receptor-like serine/threonine-protein kinase PAM74 (PAM74) from Arabidopsis thaliana (Mouse-ear cress).